A 447-amino-acid chain; its full sequence is Keratin, type I cytoskeletal 15 (447 aa).

A head region spans residues 1–93 (MATTFLQTSS…GGDGGLLSGN (93 aa)). Phosphoserine occurs at positions 16, 28, 33, and 47. Residues 94–129 (EKVTMQNLNDRLASYLDKVRALEEANTELEVKIRDW) are coil 1A. Positions 94–406 (EKVTMQNLND…NLLEGQDAKM (313 aa)) constitute an IF rod domain. Thr-120 carries the post-translational modification Phosphothreonine. Residues 130–148 (YQKQSPASPDRDYSHYFKT) are linker 1. Residues 149 to 240 (MEEIRDKILA…KNHEEEMKEF (92 aa)) are coil 1B. The tract at residues 241 to 260 (SSQLAGQVNVEMDAAPGVDL) is linker 12. A coil 2 region spans residues 261–402 (TRMLAEMREQ…STYRNLLEGQ (142 aa)). Lys-289 participates in a covalent cross-link: Glycyl lysine isopeptide (Lys-Gly) (interchain with G-Cter in SUMO2). Thr-290 and Thr-312 each carry phosphothreonine. The segment at 403 to 447 (DAKMAAIGVREASLRGGSSGGGSNFHISVEESVDGKVVSSRKRES) is tail. Lys-438 participates in a covalent cross-link: Glycyl lysine isopeptide (Lys-Gly) (interchain with G-Cter in SUMO1); alternate. Lys-438 participates in a covalent cross-link: Glycyl lysine isopeptide (Lys-Gly) (interchain with G-Cter in SUMO2); alternate.

It belongs to the intermediate filament family. Heterotetramer of two type I and two type II keratins. Forms a heterodimer with KRT14. Interacts with NOD2.

This is Keratin, type I cytoskeletal 15 from Rattus norvegicus (Rat).